Consider the following 513-residue polypeptide: ATP synthase subunit alpha (513 aa).

169–176 (GDRQTGKT) is an ATP binding site.

Belongs to the ATPase alpha/beta chains family. In terms of assembly, F-type ATPases have 2 components, CF(1) - the catalytic core - and CF(0) - the membrane proton channel. CF(1) has five subunits: alpha(3), beta(3), gamma(1), delta(1), epsilon(1). CF(0) has three main subunits: a(1), b(2) and c(9-12). The alpha and beta chains form an alternating ring which encloses part of the gamma chain. CF(1) is attached to CF(0) by a central stalk formed by the gamma and epsilon chains, while a peripheral stalk is formed by the delta and b chains.

The protein localises to the cell inner membrane. It catalyses the reaction ATP + H2O + 4 H(+)(in) = ADP + phosphate + 5 H(+)(out). Produces ATP from ADP in the presence of a proton gradient across the membrane. The alpha chain is a regulatory subunit. This Shewanella oneidensis (strain ATCC 700550 / JCM 31522 / CIP 106686 / LMG 19005 / NCIMB 14063 / MR-1) protein is ATP synthase subunit alpha.